Reading from the N-terminus, the 58-residue chain is U11-ctenitoxin-Pn1b (58 aa).

Cystine bridges form between C2–C16, C9–C22, C15–C40, C24–C38, and C48–C55.

In terms of tissue distribution, expressed by the venom gland.

It localises to the secreted. Its function is as follows. Non-toxic to mice. This chain is U11-ctenitoxin-Pn1b, found in Phoneutria nigriventer (Brazilian armed spider).